The primary structure comprises 564 residues: Urease subunit alpha (564 aa).

The region spanning 126–564 (GGIDTHIHFI…LPMAQRYFLF (439 aa)) is the Urease domain. His-131, His-133, and Lys-214 together coordinate Ni(2+). The residue at position 214 (Lys-214) is an N6-carboxylysine. His-216 serves as a coordination point for substrate. 2 residues coordinate Ni(2+): His-243 and His-269. His-317 acts as the Proton donor in catalysis. Residue Asp-357 coordinates Ni(2+).

It belongs to the metallo-dependent hydrolases superfamily. Urease alpha subunit family. Heterotrimer of UreA (gamma), UreB (beta) and UreC (alpha) subunits. Three heterotrimers associate to form the active enzyme. Ni cation serves as cofactor. Post-translationally, carboxylation allows a single lysine to coordinate two nickel ions.

It is found in the cytoplasm. It catalyses the reaction urea + 2 H2O + H(+) = hydrogencarbonate + 2 NH4(+). Its pathway is nitrogen metabolism; urea degradation; CO(2) and NH(3) from urea (urease route): step 1/1. This chain is Urease subunit alpha, found in Burkholderia thailandensis (strain ATCC 700388 / DSM 13276 / CCUG 48851 / CIP 106301 / E264).